The following is a 271-amino-acid chain: Phosphonoacetaldehyde hydrolase (271 aa).

Aspartate 12 functions as the Nucleophile in the catalytic mechanism. 2 residues coordinate Mg(2+): aspartate 12 and alanine 14. The Schiff-base intermediate with substrate role is filled by lysine 54. Residue aspartate 188 participates in Mg(2+) binding.

It belongs to the HAD-like hydrolase superfamily. PhnX family. Homodimer. It depends on Mg(2+) as a cofactor.

The catalysed reaction is phosphonoacetaldehyde + H2O = acetaldehyde + phosphate + H(+). Functionally, involved in phosphonate degradation. In Vibrio vulnificus (strain CMCP6), this protein is Phosphonoacetaldehyde hydrolase.